The following is a 426-amino-acid chain: MQRTHQLFQQARELIPGGVNSPVRAFKGVGGEPIFFERGEGPYMWDVDGKRYVDYVCSWGPLVAGHADPEIVRRVQETAAKGLSFGTPVELEVEMARTLCQHVPSLEMVRLVNSGTEATMSALRLARGFTGRDKIVKFQGNYHGHVDALLAQAGSGALTLGVPGCPGVPEAVVAETLTVPYNDIEAVEQCFNEHGSEIAAVIVEPVAGNMNCVPPVPGFLEKLREVCDRTDALLIFDEVMTGFRVGPQCAQGRYGITPDLTCLGKVVGGGMPVGAFGGRREIMEGLAPTGGVYQAGTLSGNPVTMAAGLATLERITAPGAFEGLEQTTTRVVDGIKERADAAGIPLATNQAGSMFGLFFTDDAPVTRFEQVKACDLDAFNRFFHAMLDEGVYLAPAAFEAGFVSLAHDDNAVQETLDAAERAFARV.

The residue at position 265 (lysine 265) is an N6-(pyridoxal phosphate)lysine.

The protein belongs to the class-III pyridoxal-phosphate-dependent aminotransferase family. HemL subfamily. Homodimer. Pyridoxal 5'-phosphate is required as a cofactor.

Its subcellular location is the cytoplasm. It carries out the reaction (S)-4-amino-5-oxopentanoate = 5-aminolevulinate. The protein operates within porphyrin-containing compound metabolism; protoporphyrin-IX biosynthesis; 5-aminolevulinate from L-glutamyl-tRNA(Glu): step 2/2. The polypeptide is Glutamate-1-semialdehyde 2,1-aminomutase (Halorhodospira halophila (strain DSM 244 / SL1) (Ectothiorhodospira halophila (strain DSM 244 / SL1))).